A 633-amino-acid polypeptide reads, in one-letter code: Phosphomethylpyrimidine synthase (633 aa).

Substrate is bound by residues Asn-245, Met-274, Tyr-303, His-339, 359-361, 400-403, and Glu-439; these read SRG and DGLR. Position 443 (His-443) interacts with Zn(2+). Tyr-466 serves as a coordination point for substrate. His-507 is a binding site for Zn(2+). 3 residues coordinate [4Fe-4S] cluster: Cys-587, Cys-590, and Cys-595.

It belongs to the ThiC family. In terms of assembly, homodimer. [4Fe-4S] cluster serves as cofactor.

It catalyses the reaction 5-amino-1-(5-phospho-beta-D-ribosyl)imidazole + S-adenosyl-L-methionine = 4-amino-2-methyl-5-(phosphooxymethyl)pyrimidine + CO + 5'-deoxyadenosine + formate + L-methionine + 3 H(+). The protein operates within cofactor biosynthesis; thiamine diphosphate biosynthesis. Functionally, catalyzes the synthesis of the hydroxymethylpyrimidine phosphate (HMP-P) moiety of thiamine from aminoimidazole ribotide (AIR) in a radical S-adenosyl-L-methionine (SAM)-dependent reaction. In Neisseria meningitidis serogroup A / serotype 4A (strain DSM 15465 / Z2491), this protein is Phosphomethylpyrimidine synthase.